Reading from the N-terminus, the 514-residue chain is RNA-binding region-containing protein 3 (514 aa).

The segment at 1–26 is disordered; the sequence is MAGPEPPMPLSRGGPGSASLSPPRGD. Ser-21 bears the Phosphoserine mark. The RRM 1 domain occupies 27-102; sequence RTLLVRHLPA…HTLVVEFAKE (76 aa). Disordered regions lie at residues 106 to 133, 213 to 282, and 337 to 363; these read VHSPCSTSNTEKKKRLDDTVENDKEKKE, MPLH…VRKK, and ETQPNNEEENSDSPDTGLDSNTGFGKI. At Ser-108 the chain carries Phosphoserine. The segment covering 115–133 has biased composition (basic and acidic residues); sequence TEKKKRLDDTVENDKEKKE. Residues 217 to 230 are compositionally biased toward pro residues; sequence APLPPTSPQPPEEP. Ser-349 is subject to Phosphoserine. Positions 418 to 501 constitute an RRM 2 domain; that stretch reads CRIYVKNLAR…KPMVVQFARS (84 aa).

Component of the U11/U12 snRNPs that are part of the U12-type spliceosome. Found in a complex with m(7)G-capped U12 snRNA. Interacts with PDCD7.

Its subcellular location is the nucleus. Its function is as follows. Participates in pre-mRNA U12-dependent splicing, performed by the minor spliceosome which removes U12-type introns. U12-type introns comprises less than 1% of all non-coding sequences. Binds to the 3'-stem-loop of m(7)G-capped U12 snRNA. The polypeptide is RNA-binding region-containing protein 3 (Rnpc3) (Mus musculus (Mouse)).